A 383-amino-acid polypeptide reads, in one-letter code: Protein delta homolog 2 (383 aa).

Residues 1–26 (MPSGCRCLHLVCLLCILAAPVKPVRA) form the signal peptide. EGF-like domains lie at 27-58 (DDCSSHCDLAHGCCAPDGSCRCDPGWEGLHCE), 62-89 (RMPGCQHGTCHQPWQCICHSGWAGKFCD), 91-129 (DEHVCTTQSPCRNGGQCIYDGGGEYHCVCPPGFHGRDCE), and 131-172 (KEGP…AHCE). The Extracellular segment spans residues 27–306 (DDCSSHCDLA…RQEAGLGKSS (280 aa)). Intrachain disulfides connect cysteine 29–cysteine 40, cysteine 33–cysteine 46, cysteine 48–cysteine 57, cysteine 66–cysteine 71, cysteine 79–cysteine 88, cysteine 95–cysteine 107, cysteine 101–cysteine 117, cysteine 119–cysteine 128, cysteine 135–cysteine 148, cysteine 142–cysteine 160, cysteine 162–cysteine 171, cysteine 178–cysteine 189, cysteine 183–cysteine 198, cysteine 200–cysteine 209, cysteine 216–cysteine 227, cysteine 221–cysteine 236, and cysteine 238–cysteine 247. An N-linked (GlcNAc...) asparagine glycan is attached at asparagine 157. An EGF-like 5; calcium-binding domain is found at 174–210 (NVDDCLMRPCANGATCLDGINRFSCLCPEGFAGRFCT). In terms of domain architecture, EGF-like 6; calcium-binding spans 212–248 (NLDDCASRPCQRGARCRDRVHDFDCLCPSGYGGKTCE). A helical membrane pass occupies residues 307 to 327 (LVAVVVFGAVTATLVLSTVLL). Over 328–383 (TLRAWRRGVCPPGPCCYPAPHYAPARQDQECQVSMLPAGLPLPPDLPPEPGKTTAL) the chain is Cytoplasmic.

The protein resides in the membrane. In terms of biological role, regulates adipogenesis. The chain is Protein delta homolog 2 (DLK2) from Sus scrofa (Pig).